A 321-amino-acid chain; its full sequence is Glycerol-3-phosphate dehydrogenase [NAD(P)+] (321 aa).

The NADPH site is built by S10, W11, R31, R32, Y47, and K98. Residues K98, G125, and S127 each contribute to the sn-glycerol 3-phosphate site. A129 contributes to the NADPH binding site. The sn-glycerol 3-phosphate site is built by K177, D230, S240, R241, and N242. K177 (proton acceptor) is an active-site residue. R241 contributes to the NADPH binding site. 2 residues coordinate NADPH: V265 and E267.

This sequence belongs to the NAD-dependent glycerol-3-phosphate dehydrogenase family.

It is found in the cytoplasm. It carries out the reaction sn-glycerol 3-phosphate + NAD(+) = dihydroxyacetone phosphate + NADH + H(+). The enzyme catalyses sn-glycerol 3-phosphate + NADP(+) = dihydroxyacetone phosphate + NADPH + H(+). The protein operates within membrane lipid metabolism; glycerophospholipid metabolism. In terms of biological role, catalyzes the reduction of the glycolytic intermediate dihydroxyacetone phosphate (DHAP) to sn-glycerol 3-phosphate (G3P), the key precursor for phospholipid synthesis. This Thermotoga sp. (strain RQ2) protein is Glycerol-3-phosphate dehydrogenase [NAD(P)+].